A 298-amino-acid chain; its full sequence is MIRHAPRHLRQMQIFDAVARHLSFSNAARELGLTQPAVSLQIKQIEALAGLPLFEQMGRVLLLTQAGTILLGHVRTILAAVTDADKAMDALKGKRAGALRIGVVSTAKYFAPRLLSVFTAGYPGVELGLTVANREQILGMIQENALDLFIMGRPPTEPAVRAELAPNPMVMVAASDHLVRRKLTFHDLSGETFLMREPGSGTRILMEKLMTDHGVLPHRMIEMSSNETIKQAVMAGMGISLLSRNTMSLELSVGRLVILDVEGLPIQRDWYVVIREGKHLAPVAEAMVAFLKAAARTC.

The region spanning 7-64 is the HTH lysR-type domain; it reads RHLRQMQIFDAVARHLSFSNAARELGLTQPAVSLQIKQIEALAGLPLFEQMGRVLLLT. The H-T-H motif DNA-binding region spans 24 to 43; it reads FSNAARELGLTQPAVSLQIK.

The protein belongs to the LysR transcriptional regulatory family.

Functionally, transcriptional activator for the cbb operon for RuBisCO and other Calvin cycle genes. In Rhodospirillum rubrum, this protein is HTH-type transcriptional regulator CbbR (cbbR).